We begin with the raw amino-acid sequence, 194 residues long: Transmembrane protein 212 (194 aa).

The next 5 helical transmembrane spans lie at 11–31 (ILVT…FPVF), 44–64 (IACP…LLLA), 76–96 (ATFT…AIAL), 99–119 (ALLG…NYLG), and 148–168 (LQAL…TVFI).

The protein resides in the membrane. This is Transmembrane protein 212 (TMEM212) from Homo sapiens (Human).